Consider the following 644-residue polypeptide: MPEPHAVLYVTNELSHIVKNGFLPIWKLTGDESLNDLWLENGKYATDVYAYGDVSKWTIRQLRGHGFIFISTHKNVQLADIIKTVDVRIPREVARSHDMKAFENEIGRRRIRMRKGFGDALRNYAFKMAIEFHGSEAETLNDANPRLHKVYGMPEIPPLYMEYAEIGARFDDEPTDEKLVSMLDYIVYSAEEVHYVGCGDLRTLMQFKKRSPGRFRRVLWHVYDPIAPECSDPNVIVHNIMVDSKKDILKYMNFLKRVERLFIWDVSSDRSQMNDHEWETTRFAEDRLGEEIAYEMGGAFSSALIKHRIPNSKDEYHCISTYLFPQPGADADMYELRNFMRLRGYSHVDRHMHPDASVTKVVSRDVRKMVELYHGRDRGTFLKKRLFEHLHIVRKNGLLHESDEPRADLFYLTNRCNMGLEPSIYEVMKKSVIATAWVGRAPLYDYDDFALPRSTVMLNGSYRDISILDGNGAILYLMWRYPDIVKKDLTYDPAWAMNFAVSLKEPIPDPPVPDISLCRFIGLRVESSVLRVRNPTLHETADELKRMGLDLSGHLYVTLMSGAYVTDLFWWFNIILDWSAQNKEQKLRDLKRSAAEVIEWKEQMAERPWHVRNDLIRALREYKRKMGMREGASIDSWLELLRHL.

It belongs to the orbivirus VP4 family.

The protein resides in the virion. Its function is as follows. The VP4 protein is one of the five proteins (with VP1, VP3, VP6 and VP7) which form the inner capsid of the virus. This is Core protein VP4 (Segment-4) from Bluetongue virus 13 (isolate USA) (BTV 13).